Consider the following 436-residue polypeptide: Alpha-galactosidase mel1 (436 aa).

Residues 1 to 24 (MISISFLNCFFLVFLFLFFSDVHG) form the signal peptide. Cys45 and Cys77 are joined by a disulfide. Asn84 is a glycosylation site (N-linked (GlcNAc...) asparagine). A disulfide bridge links Cys126 with Cys156. Asp154 serves as the catalytic Nucleophile. An N-linked (GlcNAc...) asparagine glycan is attached at Asn180. Catalysis depends on Asp214, which acts as the Proton donor.

It belongs to the glycosyl hydrolase 27 family.

Its subcellular location is the endoplasmic reticulum lumen. It is found in the secreted. The catalysed reaction is Hydrolysis of terminal, non-reducing alpha-D-galactose residues in alpha-D-galactosides, including galactose oligosaccharides, galactomannans and galactolipids.. Its function is as follows. Secreted alpha-galactosidase required for catabolic conversion of melibiose to glucose and galactose. This Schizosaccharomyces pombe (strain 972 / ATCC 24843) (Fission yeast) protein is Alpha-galactosidase mel1 (mel1).